Reading from the N-terminus, the 460-residue chain is Cyclic 2,3-diphosphoglycerate synthetase (460 aa).

In terms of assembly, homodimer.

The protein resides in the cytoplasm. The catalysed reaction is (2R)-2,3-bisphosphoglycerate + ATP + H(+) = cyclic (2R)-2,3-bisphosphoglycerate + ADP + phosphate. Catalyzes the formation of cyclic 2,3-diphosphoglycerate (cDPG) by formation of an intramolecular phosphoanhydride bond at the expense of ATP. It is also able to catalyze the hydrolysis of cDPG but with significant slower rates (8-10 times). May be involved in thermoadaptation. The polypeptide is Cyclic 2,3-diphosphoglycerate synthetase (cpgS) (Methanothermus fervidus (strain ATCC 43054 / DSM 2088 / JCM 10308 / V24 S)).